The chain runs to 663 residues: Transforming growth factor beta activator LRRC32 (663 aa).

An N-terminal signal peptide occupies residues 1–17 (MSHQILLLLAMLTLGLA). Topologically, residues 18-628 (ISQRREQVPC…CEKGGLKNVN (611 aa)) are extracellular. In terms of domain architecture, LRRNT spans 22–49 (REQVPCRTVNKEALCHGLGLLQVPSVLS). LRR repeat units lie at residues 49-72 (SLDIQALYLSGNQLQSILVSPLGF), 73-96 (YTALRHLDLSDNQISFLQAGVFQA), 98-123 (PYLEHLNLAHNRLATGMALNSGGLGR), 125-148 (PLLVSLDLSGNSLHGNLVERLLGE), 149-172 (TPRLRTLSLAENSLTRLARHTFWG), 174-196 (PAVEQLDLHSNVLMDIEDGAFEA), 197-220 (LPHLTHLNLSRNSLTCISDFSLQQ), 222-241 (QVLDLSCNSIEAFQTAPEPQ), 243-267 (QFQLAWLDLRENKLLHFPDLAVFPR), and 269-287 (IYLNVSNNLIQLPAGLPRG). An N-linked (GlcNAc...) asparagine glycan is attached at N204. N-linked (GlcNAc...) asparagine glycans are attached at residues N272, N305, and N309. The interval 291–311 (LHAPSEGWSASPLSNPSRNAS) is disordered. A compositionally biased stretch (polar residues) spans 301 to 311 (SPLSNPSRNAS). 11 LRR repeats span residues 315–338 (LSQLLNLDLSYNEIELVPASFLEH), 340–362 (TSLRFLNLSRNCLRSFEARQVDS), 363–386 (LPCLVLLDLSHNVLEALELGTKVL), 387–409 (GSLQTLLLQDNALQELPPYTFAS), 411–433 (ASLQRLNLQGNQVSPCGGPAEPG), 443–466 (IPTLHVLNMAGNSMGMLRAGSFLH), 468–489 (PLTELDLSTNPGLDVATGALVG), 491–514 (EASLEVLELQGNGLTVLRVDLPCF), 515–539 (LRLKRLNLAENQLSHLPAWTRAVSL), 541–559 (VLDLRNNSFSLLPGNAMGG), and 561–584 (ETSLRRLYLQGNPLSCCGNGWLAA). A glycan (N-linked (GlcNAc...) asparagine) is linked at N346. Residue N546 is glycosylated (N-linked (GlcNAc...) asparagine). Residues 572–621 (NPLSCCGNGWLAAQLHQGRVDVDATQDLICRFGSQEELSLSLVRPEDCEK) form the LRRCT domain. Residues 629-649 (LILLLSFTLVSAIVLTTLATI) form a helical membrane-spanning segment. At 650 to 663 (CFLRRQKLSQQYKA) the chain is on the cytoplasmic side.

The protein belongs to the LRRC32/LRRC33 family. As to quaternary structure, interacts with TGFB1; associates via disulfide bonds with the Latency-associated peptide chain (LAP) regulatory chain of TGFB1, leading to regulate activation of TGF-beta-1. Interacts with TGFB2. Interacts with TGFB3; associates via disulfide bonds with the Latency-associated peptide chain (LAP) regulatory chain of TGFB3, leading to regulate activation of TGF-beta-3. Interacts with LAPTM4B; decreases TGFB1 production in regulatory T-cells. Present in medial edge epithelial cells at 14.5 dpc (at protein level).

Its subcellular location is the cell membrane. It is found in the cell surface. In terms of biological role, key regulator of transforming growth factor beta (TGFB1, TGFB2 and TGFB3) that controls TGF-beta activation by maintaining it in a latent state during storage in extracellular space. Associates specifically via disulfide bonds with the Latency-associated peptide (LAP), which is the regulatory chain of TGF-beta, and regulates integrin-dependent activation of TGF-beta. Able to outcompete LTBP1 for binding to LAP regulatory chain of TGF-beta. Controls activation of TGF-beta-1 (TGFB1) on the surface of activated regulatory T-cells (Tregs). Required for epithelial fusion during palate development by regulating activation of TGF-beta-3 (TGFB3). In Mus musculus (Mouse), this protein is Transforming growth factor beta activator LRRC32.